Consider the following 86-residue polypeptide: uncharacterized protein (86 aa).

The N-terminal stretch at 1-22 (MKTINTVVAAMALSTLSFGVFA) is a signal peptide.

This sequence belongs to the BhsA/McbA family.

The protein resides in the periplasm. This is an uncharacterized protein from Escherichia coli O6:H1 (strain CFT073 / ATCC 700928 / UPEC).